The sequence spans 131 residues: Methylglyoxal synthase (131 aa).

An MGS-like domain is found at 1–131 (MKIALIAHDK…GDLDYRKLRK (131 aa)). Substrate-binding positions include H8, K12, 34-37 (TGTT), and 54-55 (SG). Catalysis depends on D60, which acts as the Proton donor/acceptor. Residue H87 coordinates substrate.

The protein belongs to the methylglyoxal synthase family.

It catalyses the reaction dihydroxyacetone phosphate = methylglyoxal + phosphate. In terms of biological role, catalyzes the formation of methylglyoxal from dihydroxyacetone phosphate. The protein is Methylglyoxal synthase of Bacillus cereus (strain ATCC 14579 / DSM 31 / CCUG 7414 / JCM 2152 / NBRC 15305 / NCIMB 9373 / NCTC 2599 / NRRL B-3711).